A 317-amino-acid chain; its full sequence is MDRLELIRRNVQEIVTEEELEGLLKNKEAPRAYVGYEPSGKIHMGHVLTVNKLIDLQKAGFKITVLLADVHAYLNKKGTLEEVRKIADYNRRCFIALGLDEEQTDFVYGSDFQLGAEYMLNVLKLSRAVTLNRAKRSMDEVGRAMDDPTVSQMVYPLMQAIDIALLEVDVAVGGIDQRKIHMLARENLKSLGFETPICIHTPILLGLDGTKMASSKDNFISIDDTGEDIYRKFKKAFCKIGDVEENPILALFRYHIFPRYETVVIERPEKFGGDITYHSYAEMESNFIEEKVHPMDLKNAAAKYINEILDPVRKVLL.

Tyr-33 provides a ligand contact to L-tyrosine. Residues 38 to 46 (PSGKIHMGH) carry the 'HIGH' region motif. Residues Tyr-155, Gln-159, Asp-162, and Gln-177 each contribute to the L-tyrosine site. The 'KMSKS' region signature appears at 211–215 (KMASS). Ser-214 contacts ATP.

This sequence belongs to the class-I aminoacyl-tRNA synthetase family. TyrS type 3 subfamily. In terms of assembly, homodimer.

It is found in the cytoplasm. The catalysed reaction is tRNA(Tyr) + L-tyrosine + ATP = L-tyrosyl-tRNA(Tyr) + AMP + diphosphate + H(+). In terms of biological role, catalyzes the attachment of tyrosine to tRNA(Tyr) in a two-step reaction: tyrosine is first activated by ATP to form Tyr-AMP and then transferred to the acceptor end of tRNA(Tyr). The chain is Tyrosine--tRNA ligase from Methanosarcina acetivorans (strain ATCC 35395 / DSM 2834 / JCM 12185 / C2A).